Here is a 338-residue protein sequence, read N- to C-terminus: Phosphate acyltransferase (338 aa).

This sequence belongs to the PlsX family. In terms of assembly, homodimer. Probably interacts with PlsY.

The protein localises to the cytoplasm. It carries out the reaction a fatty acyl-[ACP] + phosphate = an acyl phosphate + holo-[ACP]. The protein operates within lipid metabolism; phospholipid metabolism. Its function is as follows. Catalyzes the reversible formation of acyl-phosphate (acyl-PO(4)) from acyl-[acyl-carrier-protein] (acyl-ACP). This enzyme utilizes acyl-ACP as fatty acyl donor, but not acyl-CoA. The protein is Phosphate acyltransferase of Gloeobacter violaceus (strain ATCC 29082 / PCC 7421).